The primary structure comprises 357 residues: Acyl-coenzyme A:6-aminopenicillanic-acid-acyltransferase 40 kDa form (357 aa).

Asp121 and Arg310 together coordinate 6-aminopenicillanate.

This sequence belongs to the peptidase C45 family. In terms of assembly, the active form of the enzyme results from processing of the 40-kDa monomeric precursor to a heterodimer containing subunits of 11 and 29 kDa. Post-translationally, the pre-AAT protein is synthesized as 40 kDa precursor which is then self-processed into an 11 kDa (protein A) and a 29 kDa (protein B). The B protein carries AAT activity.

It is found in the peroxisome matrix. The catalysed reaction is isopenicillin N + phenylacetyl-CoA + H2O = penicillin G + L-2-aminoadipate + CoA + H(+). It participates in antibiotic biosynthesis; penicillin G biosynthesis; penicillin G from L-alpha-aminoadipate and L-cysteine and L-valine: step 3/3. Functionally, nonribosomal peptide synthetase; part of the gene cluster that mediates the biosynthesis of penicillin, the world's most important antibiotic. AatA catalyzes the exchange of the alpha-aminoadipyl side chain of isopenicillin N for phenylacetic acid to yield penicillin. This step occurs in the peroxisomal matrix and the penM and paaT transporters are involved in the isopenicillin N and phenylacetic acid import into the peroxisome, respectively. The penicillin biosynthesis occurs via 3 enzymatic steps, the first corresponding to the production of the tripeptide N-[(5S)-5-amino-5-carboxypentanoyl]-L-cysteinyl-D-valine (LLD-ACV or ACV) by the NRPS acvA. The tripeptide ACV is then cyclized to isopenicillin N (IPN) by the isopenicillin N synthase ipnA that forms the beta-lactam nucleus. Finally, the alpha-aminoadipyl side chain is exchanged for phenylacetic acid by the isopenicillin N acyltransferase penDE to yield penicillin in the peroxisomal matrix. The polypeptide is Acyl-coenzyme A:6-aminopenicillanic-acid-acyltransferase 40 kDa form (Emericella nidulans (strain FGSC A4 / ATCC 38163 / CBS 112.46 / NRRL 194 / M139) (Aspergillus nidulans)).